Consider the following 184-residue polypeptide: Ribosome-recycling factor (184 aa).

The protein belongs to the RRF family.

Its subcellular location is the cytoplasm. Functionally, responsible for the release of ribosomes from messenger RNA at the termination of protein biosynthesis. May increase the efficiency of translation by recycling ribosomes from one round of translation to another. This Clostridium botulinum (strain Langeland / NCTC 10281 / Type F) protein is Ribosome-recycling factor.